An 87-amino-acid chain; its full sequence is uncharacterized protein (87 aa).

This sequence to B.subtilis XkdR.

This is an uncharacterized protein from Bacillus subtilis (strain 168).